The primary structure comprises 69 residues: Sperm protamine P1 (69 aa).

A disordered region spans residues methionine 1–tyrosine 69.

Belongs to the protamine P1 family. As to expression, testis.

Its subcellular location is the nucleus. It is found in the chromosome. Protamines substitute for histones in the chromatin of sperm during the haploid phase of spermatogenesis. They compact sperm DNA into a highly condensed, stable and inactive complex. In Pseudochirops cupreus (Coppery ringtail), this protein is Sperm protamine P1 (PRM1).